A 362-amino-acid polypeptide reads, in one-letter code: Shewanella-like protein phosphatase 1 (362 aa).

The N-terminal stretch at 1–23 (MIFKKALYILLFLYIAIVKKGES) is a signal peptide. Mn(2+) contacts are provided by Asp65, His67, Asp101, and Asn136. Catalysis depends on His137, which acts as the Proton donor. His196 provides a ligand contact to Mn(2+).

It belongs to the metallophosphoesterase superfamily. SLP family. Mn(2+) is required as a cofactor.

In terms of biological role, phosphatase which plays an essential role in the development and differentiation of the ookinete and in the formation of ookinete micronemes. This Plasmodium berghei (strain Anka) protein is Shewanella-like protein phosphatase 1.